The chain runs to 174 residues: Single-stranded DNA-binding protein 1 (174 aa).

Residues 6-111 (VNKVILVGNL…VVVNVGGTMQ (106 aa)) form the SSB domain. A DNA-binding region spans residues 55–61 (WHRVVLF). A disordered region spans residues 110 to 174 (MQMLGGRQGG…PMDFDDDIPF (65 aa)). Over residues 115 to 133 (GRQGGGAPAGGGQQQGGWG) the composition is skewed to gly residues. Positions 134–160 (QPQQPQGGNQFSGGAQSRPQQQAPAAP) are enriched in low complexity. The short motif at 169 to 174 (DDDIPF) is the Important for interaction with partner proteins element.

As to quaternary structure, homotetramer. Binds PriA via its C-terminus.

Plays an important role in DNA replication, recombination and repair. Binds to ssDNA and to an array of partner proteins to recruit them to their sites of action during DNA metabolism. Stimulates the ATPase activity of PriA. One tetramer binds to 26 nucleotides (nt) of ssDNA, a 55 nt piece of ssDNA probably binds 2 tetramers. The sequence is that of Single-stranded DNA-binding protein 1 from Klebsiella pneumoniae subsp. pneumoniae (strain ATCC 700721 / MGH 78578).